We begin with the raw amino-acid sequence, 91 residues long: Mercuric transport protein periplasmic component (91 aa).

Positions 1-19 (MKKLLSALALAAVVAPVWA) are cleaved as a signal peptide. Residues 22 to 88 (QTVTLSVPGM…ATEDAGYPSS (67 aa)) form the HMA domain. Positions 33 and 36 each coordinate Hg(2+).

Belongs to the MerP family. Monomer.

Its subcellular location is the periplasm. Its function is as follows. Involved in mercury resistance. Acts as a mercury scavenger that specifically binds to a mercuric ion in the periplasm and probably passes it to the cytoplasmic mercuric reductase MerA via the mercuric transport protein MerT. In Pseudomonas fluorescens, this protein is Mercuric transport protein periplasmic component.